The chain runs to 352 residues: 3-dehydroquinate synthase (352 aa).

NAD(+) is bound by residues 60–65 (DGEGAK), 118–119 (TT), lysine 131, lysine 140, and 158–161 (FLET). The Zn(2+) site is built by glutamate 173, histidine 237, and histidine 253.

Belongs to the sugar phosphate cyclases superfamily. Dehydroquinate synthase family. NAD(+) serves as cofactor. It depends on Co(2+) as a cofactor. Zn(2+) is required as a cofactor.

The protein localises to the cytoplasm. The enzyme catalyses 7-phospho-2-dehydro-3-deoxy-D-arabino-heptonate = 3-dehydroquinate + phosphate. It participates in metabolic intermediate biosynthesis; chorismate biosynthesis; chorismate from D-erythrose 4-phosphate and phosphoenolpyruvate: step 2/7. Functionally, catalyzes the conversion of 3-deoxy-D-arabino-heptulosonate 7-phosphate (DAHP) to dehydroquinate (DHQ). The polypeptide is 3-dehydroquinate synthase (Sulfurisphaera tokodaii (strain DSM 16993 / JCM 10545 / NBRC 100140 / 7) (Sulfolobus tokodaii)).